Here is a 210-residue protein sequence, read N- to C-terminus: Uridine kinase (210 aa).

14–21 (GGSGSGKT) lines the ATP pocket.

Belongs to the uridine kinase family.

Its subcellular location is the cytoplasm. It carries out the reaction uridine + ATP = UMP + ADP + H(+). The catalysed reaction is cytidine + ATP = CMP + ADP + H(+). It participates in pyrimidine metabolism; CTP biosynthesis via salvage pathway; CTP from cytidine: step 1/3. It functions in the pathway pyrimidine metabolism; UMP biosynthesis via salvage pathway; UMP from uridine: step 1/1. The chain is Uridine kinase from Deinococcus radiodurans (strain ATCC 13939 / DSM 20539 / JCM 16871 / CCUG 27074 / LMG 4051 / NBRC 15346 / NCIMB 9279 / VKM B-1422 / R1).